The chain runs to 366 residues: MKKTALYPCHEQSGAKIIDFGGYLMPVQYAGIIAEHKAVRSAAGLFDVSHMGNFFVKGSRALEFLQFVTTNDLAKVVDGQAQYNLMLYPSGGIVDDLIIYRMSADTFFLIVNASNADKDFAWLQQHIDQFEGVTLEDHTERLSLIALQGPLALSILNRLFPSIDGEALGSFHFCSASFNGFDVIIARTGYTGEKGVEMCVPNEAAIALWEALMAAGAADGIQPIGLGARDTLRLEMGYSLYGHEINQDTNPLEARLKWVVKMDKGHFIGKEACEQAMQHPQRTVIGFSLEGRALPRQGFTLYNSDRQAIGVVCSGTLSPTLQEPVGTCSVLREYGKPGTPILVEVRGAFHAGIIRSLPFVTNTSLA.

The protein belongs to the GcvT family. In terms of assembly, the glycine cleavage system is composed of four proteins: P, T, L and H.

The catalysed reaction is N(6)-[(R)-S(8)-aminomethyldihydrolipoyl]-L-lysyl-[protein] + (6S)-5,6,7,8-tetrahydrofolate = N(6)-[(R)-dihydrolipoyl]-L-lysyl-[protein] + (6R)-5,10-methylene-5,6,7,8-tetrahydrofolate + NH4(+). The glycine cleavage system catalyzes the degradation of glycine. This Chlorobium chlorochromatii (strain CaD3) protein is Aminomethyltransferase.